The chain runs to 127 residues: Fluoride-specific ion channel FluC (127 aa).

The next 4 helical transmembrane spans lie at 4–24 (IMLA…WLGL), 35–55 (VGTL…LAWF), 71–91 (TGLC…VFLL), and 101–121 (LNVA…FWLF). Residues Gly-75 and Thr-78 each coordinate Na(+).

The protein belongs to the fluoride channel Fluc/FEX (TC 1.A.43) family.

It localises to the cell inner membrane. It catalyses the reaction fluoride(in) = fluoride(out). With respect to regulation, na(+) is not transported, but it plays an essential structural role and its presence is essential for fluoride channel function. Its function is as follows. Fluoride-specific ion channel. Important for reducing fluoride concentration in the cell, thus reducing its toxicity. This chain is Fluoride-specific ion channel FluC, found in Cronobacter sakazakii (strain ATCC BAA-894) (Enterobacter sakazakii).